A 145-amino-acid polypeptide reads, in one-letter code: Flagellar assembly factor FliW (145 aa).

The protein belongs to the FliW family. As to quaternary structure, interacts with translational regulator CsrA and flagellin(s).

Its subcellular location is the cytoplasm. Functionally, acts as an anti-CsrA protein, binds CsrA and prevents it from repressing translation of its target genes, one of which is flagellin. Binds to flagellin and participates in the assembly of the flagellum. The protein is Flagellar assembly factor FliW of Exiguobacterium sp. (strain ATCC BAA-1283 / AT1b).